A 151-amino-acid chain; its full sequence is uncharacterized protein (151 aa).

This is an uncharacterized protein from Saccharomyces cerevisiae (strain ATCC 204508 / S288c) (Baker's yeast).